A 506-amino-acid polypeptide reads, in one-letter code: Maturase K (506 aa).

Belongs to the intron maturase 2 family. MatK subfamily.

It localises to the plastid. Its subcellular location is the chloroplast. In terms of biological role, usually encoded in the trnK tRNA gene intron. Probably assists in splicing its own and other chloroplast group II introns. The polypeptide is Maturase K (Ocimum basilicum (Sweet basil)).